The chain runs to 72 residues: Galensin (72 aa).

A signal peptide spans 1-22 (MLTLKKSMLLLFFLGLVSVSLA). Positions 23–48 (DDKREDEAEEGEDKRAAEEERNVEKR) are excised as a propeptide. Position 71 is a phenylalanine amide (Phe71).

The protein belongs to the frog skin active peptide (FSAP) family. Brevinin subfamily. As to quaternary structure, homodimer; disulfide-linked. As to expression, expressed by the skin glands.

It is found in the secreted. Antibacterial activity against the Gram-positive bacterium M.luteus and the Gram-negative bacterium E.coli. The sequence is that of Galensin from Kassina senegalensis (Senegal running frog).